A 112-amino-acid polypeptide reads, in one-letter code: Transmembrane protein 14 homolog (112 aa).

The chain crosses the membrane as a helical span at residues 3–23 (VDWFGYVYAATVAAGGIMGYA).

This sequence belongs to the TMEM14 family.

The protein localises to the membrane. This chain is Transmembrane protein 14 homolog, found in Drosophila melanogaster (Fruit fly).